A 199-amino-acid polypeptide reads, in one-letter code: Probable chemoreceptor glutamine deamidase CheD (199 aa).

This sequence belongs to the CheD family.

It carries out the reaction L-glutaminyl-[protein] + H2O = L-glutamyl-[protein] + NH4(+). Its function is as follows. Probably deamidates glutamine residues to glutamate on methyl-accepting chemotaxis receptors (MCPs), playing an important role in chemotaxis. In Cereibacter sphaeroides (strain ATCC 17029 / ATH 2.4.9) (Rhodobacter sphaeroides), this protein is Probable chemoreceptor glutamine deamidase CheD.